The following is a 297-amino-acid chain: Averufin oxidase stcO (297 aa).

The helical transmembrane segment at 277-297 (VVVLGVCILLLLGGLLYSIKA) threads the bilayer.

The protein belongs to the avfA family.

It localises to the membrane. It functions in the pathway mycotoxin biosynthesis; sterigmatocystin biosynthesis. In terms of biological role, averufin oxidase; part of the gene cluster that mediates the biosynthesis of sterigmatocystin (ST), a polyketide-derived furanocoumarin which is part of the most toxic and carcinogenic compounds among the known mycotoxins. The first step in the biosynthesis of sterigmatocystin is the production of hexanoate by the fatty acid synthase (FAS) units stcJ and stcK. The polyketide backbone is assembled by the non-reducing polyketide synthase stcA by condensation of the starter hexanoyl-CoA and 7 malonyl-CoA extender units followed by cyclization and release of norsolorinic acid. Norsolorinic acid is the first stable intermediate in the biosynthesis of sterigmatocystin and is converted into averantin (AVN) by the ketoreductase stcE which reduces the hexanoate ketone to an alcohol. Averantin is then oxidized into 5'-hydroxyaverantin (HAVN) by the cytochrome P450 monooxygenase stcF. 5'-hydroxyaverantin is further converted to 5'-oxyaverantin (OAVN) by the 5'-hydroxyaverantin dehydrogenase stcG. The next step is the conversion of OAVN into averufin (AVF) which is catalyzed by a yet to be identified enzyme. The cytochrome P450 monooxygenase stcB and the flavin-binding monooxygenase stcW are both required for the conversion of averufin to 1-hydroxyversicolorone. The esterase stcI probably catalyzes the formation of versiconal hemiacetal acetate from 1-hydroxyversicolorone. The oxydoreductase stcN then probably catalyzes the biosynthetic step from versiconal to versicolorin B (VERB). The next step is performed by the versicolorin B desaturase stcL to produce versicolorin A (VERA). The ketoreductase stcU and the cytochrome P450 monooxygenase stcS are involved in the conversion of versicolorin A to demethylsterigmatocystin. The Baeyer-Villiger oxidas stcQ and the reductase stcR might be involved in the biosynthetic step from versicolorin A to demethylsterigmatocystin. The final step in the biosynthesis of sterigmatocystin is the methylation of demethylsterigmatocystin catalyzed by the methyltransferase stcP. The polypeptide is Averufin oxidase stcO (Emericella nidulans (strain FGSC A4 / ATCC 38163 / CBS 112.46 / NRRL 194 / M139) (Aspergillus nidulans)).